The following is a 624-amino-acid chain: Leucine-rich repeat and IQ domain-containing protein 3 (624 aa).

LRR repeat units lie at residues 51-72, 73-94, and 98-119; these read SLRV…QSCI, KLIK…KFWN, and NLKL…CVLS. The LRRCT domain maps to 132–179; it reads CPVSLKKGYRHVLVNSIWPLKALDHHVISDEEIIQNWHLPERFKACNH. The 30-residue stretch at 215 to 244 folds into the IQ domain; it reads HNSPVLIVQRWIRGFLVRKNLSPVFFHKKK. Residues 553-614 adopt a coiled-coil conformation; sequence KQKLKAEKYR…TKVAIVKTNL (62 aa).

This Homo sapiens (Human) protein is Leucine-rich repeat and IQ domain-containing protein 3 (LRRIQ3).